A 123-amino-acid polypeptide reads, in one-letter code: Plasminogen (123 aa).

The 79-residue stretch at 40-118 folds into the Kringle domain; sequence DCYHGNGQSY…RWEFCNLKKC (79 aa). Disulfide bonds link cysteine 41/cysteine 118, cysteine 62/cysteine 101, and cysteine 90/cysteine 113.

The protein belongs to the peptidase S1 family. Plasminogen subfamily. As to quaternary structure, interacts with CSPG4 and AMOT. Interacts (via the Kringle domains) with HRG; the interaction tethers PLG to the cell surface and enhances its activation. Interacts (via Kringle 4 domain) with ADA; the interaction stimulates PLG activation when in complex with DPP4. Angiostatin: Interacts with ATP5F1A; the interaction inhibits most of the angiogenic effects of angiostatin.

The protein resides in the secreted. It catalyses the reaction Preferential cleavage: Lys-|-Xaa &gt; Arg-|-Xaa, higher selectivity than trypsin. Converts fibrin into soluble products.. With respect to regulation, converted into plasmin by plasminogen activators, both plasminogen and its activator being bound to fibrin. Cannot be activated with streptokinase. Functionally, plasmin dissolves the fibrin of blood clots and acts as a proteolytic factor in a variety of other processes including embryonic development, tissue remodeling, tumor invasion, and inflammation. In ovulation, weakens the walls of the Graafian follicle. It activates the urokinase-type plasminogen activator, collagenases and several complement zymogens, such as C1, C4 and C5. Cleavage of fibronectin and laminin leads to cell detachment and apoptosis. Also cleaves fibrin, thrombospondin and von Willebrand factor. Its role in tissue remodeling and tumor invasion may be modulated by CSPG4. Binds to cells. The chain is Plasminogen (PLG) from Capra hircus (Goat).